The primary structure comprises 553 residues: Mucolipin-3 (553 aa).

At 1–62 the chain is on the cytoplasmic side; sequence MADPEVVVSS…FWARGRKPWK (62 aa). An interaction with phosphoinositides region spans residues 52–62; that stretch reads KFWARGRKPWK. Residues 63–83 form a helical membrane-spanning segment; that stretch reads LAIQILKIAMVTIQLVLFGLS. Residues 84–283 are Extracellular-facing; that stretch reads NQMVVAFKEE…VSGSIQKNTH (200 aa). Positions 104–118 are extracellular/lumenal pore loop; that stretch reads KGYMDRMDDTYAVYT. 3 N-linked (GlcNAc...) asparagine glycosylation sites follow: Asn-138, Asn-172, and Asn-205. The cysteines at positions 159 and 185 are disulfide-linked. A disulfide bridge links Cys-238 with Cys-269. Residues 284–304 traverse the membrane as a helical segment; that stretch reads YMMIFDAFVILTCLVSLILCI. The Cytoplasmic segment spans residues 305 to 341; the sequence is RSVIRGLQLQQEFVNFFLLHYKKEVSVSDQMEFVNGW. Residues 342–362 form a helical membrane-spanning segment; it reads YIMIIISDILTIIGSILKMEI. The Extracellular portion of the chain corresponds to 363–371; sequence QAKSLTSYD. A helical transmembrane segment spans residues 372 to 392; it reads VCSILLGTSTMLVWLGVIRYL. Residues 393 to 414 lie on the Cytoplasmic side of the membrane; sequence GFFAKYNLLILTLQAALPNVIR. A helical membrane pass occupies residues 415–435; it reads FCCCAAMIYLGYCFCGWIVLG. The Extracellular portion of the chain corresponds to 436-443; it reads PYHDKFRS. Residues 444–464 constitute an intramembrane region (pore-forming); it reads LNMVSECLFSLINGDDMFATF. The short motif at 456-459 is the Selectivity filter element; it reads NGDD. Residues 465–475 are Extracellular-facing; that stretch reads AKMQQKSYLVW. A helical transmembrane segment spans residues 476 to 497; the sequence is LFSRIYLYSFISLFIYMILSLF. The Cytoplasmic segment spans residues 498–553; it reads IALITDTYETIKQYQQDGFPETELRTFISECKDLPNSGKYRLEDDPPVSLFCCCKK.

The protein belongs to the transient receptor (TC 1.A.4) family. Polycystin subfamily. MCOLN3 sub-subfamily. In terms of assembly, homotetramer. Can heterooligomerize with MCOLN1; heteromeric assemblies have different channel properties as compared to the respective homooligomers and may be tissue-specific. May heterooligomerize with TRPV5 to form a functional distinct ion channel. Interacts with GABARAPL2. N-glycosylated.

The protein localises to the cell membrane. Its subcellular location is the early endosome membrane. The protein resides in the late endosome membrane. It localises to the lysosome membrane. It is found in the cytoplasmic vesicle. The protein localises to the autophagosome membrane. The catalysed reaction is Ca(2+)(in) = Ca(2+)(out). It carries out the reaction K(+)(in) = K(+)(out). It catalyses the reaction Na(+)(in) = Na(+)(out). Its activity is regulated as follows. Channel activity is activated by PtdIns(3,5)P2 (phosphatidylinositol 3,5-bisphosphate). Inhibited by lumenal H(+) and Na(+). The channel pore shows dynamic behavior and undergoes spontaneous, Ca(2+)-dependent modulation when conducting Ca(2+). Nonselective cation channel probably playing a role in the regulation of membrane trafficking events. Acts as a Ca(2+)-permeable cation channel with inwardly rectifying activity. Mediates release of Ca(2+) from endosomes to the cytoplasm, contributes to endosomal acidification and is involved in the regulation of membrane trafficking and fusion in the endosomal pathway. Also permeable to Mg(2+), Na(+) and K(+). Does not seem to act as mechanosensory transduction channel in inner ear sensory hair cells. Proposed to play a critical role at the cochlear stereocilia ankle-link region during hair-bundle growth. Involved in the regulation of autophagy. Through association with GABARAPL2 may be involved in autophagosome formation possibly providing Ca(2+) for the fusion process. Through a possible and probably tissue-specific heteromerization with MCOLN1 may be at least in part involved in many lysosome-dependent cellular events. Possible heteromeric ion channel assemblies with TRPV5 show pharmacological similarity with TRPML3. This Homo sapiens (Human) protein is Mucolipin-3 (MCOLN3).